The following is a 223-amino-acid chain: Putative protein phosphatase 2C 63 (223 aa).

Residues 1-22 (MASSQQAVRETGRGRASSSSAG) form a disordered region. The PPM-type phosphatase domain maps to 1–212 (MASSQQAVRE…RNFHVHSSHV (212 aa)).

Belongs to the PP2C family.

The enzyme catalyses O-phospho-L-seryl-[protein] + H2O = L-seryl-[protein] + phosphate. The catalysed reaction is O-phospho-L-threonyl-[protein] + H2O = L-threonyl-[protein] + phosphate. This Oryza sativa subsp. japonica (Rice) protein is Putative protein phosphatase 2C 63.